Reading from the N-terminus, the 127-residue chain is Mediator of RNA polymerase II transcription subunit 9 (127 aa).

Residues 95–119 adopt a coiled-coil conformation; it reads QKEQEIEAKKRVHRQLRQRVEEIAG.

This sequence belongs to the Mediator complex subunit 9 family. As to quaternary structure, component of the Mediator complex.

It is found in the nucleus. Component of the Mediator complex, a coactivator involved in the regulated transcription of nearly all RNA polymerase II-dependent genes. Mediator functions as a bridge to convey information from gene-specific regulatory proteins to the basal RNA polymerase II transcription machinery. Mediator is recruited to promoters by direct interactions with regulatory proteins and serves as a scaffold for the assembly of a functional preinitiation complex with RNA polymerase II and the general transcription factors. In Eremothecium gossypii (strain ATCC 10895 / CBS 109.51 / FGSC 9923 / NRRL Y-1056) (Yeast), this protein is Mediator of RNA polymerase II transcription subunit 9 (CSE2).